Here is a 619-residue protein sequence, read N- to C-terminus: Dihydroxy-acid dehydratase (619 aa).

Residue Asp-81 participates in Mg(2+) binding. Cys-122 contacts [2Fe-2S] cluster. Mg(2+) is bound by residues Asp-123 and Lys-124. Lys-124 bears the N6-carboxylysine mark. Cys-195 is a binding site for [2Fe-2S] cluster. A Mg(2+)-binding site is contributed by Glu-494. The active-site Proton acceptor is the Ser-520.

It belongs to the IlvD/Edd family. In terms of assembly, homodimer. It depends on [2Fe-2S] cluster as a cofactor. The cofactor is Mg(2+).

It catalyses the reaction (2R)-2,3-dihydroxy-3-methylbutanoate = 3-methyl-2-oxobutanoate + H2O. The catalysed reaction is (2R,3R)-2,3-dihydroxy-3-methylpentanoate = (S)-3-methyl-2-oxopentanoate + H2O. It functions in the pathway amino-acid biosynthesis; L-isoleucine biosynthesis; L-isoleucine from 2-oxobutanoate: step 3/4. The protein operates within amino-acid biosynthesis; L-valine biosynthesis; L-valine from pyruvate: step 3/4. Functionally, functions in the biosynthesis of branched-chain amino acids. Catalyzes the dehydration of (2R,3R)-2,3-dihydroxy-3-methylpentanoate (2,3-dihydroxy-3-methylvalerate) into 2-oxo-3-methylpentanoate (2-oxo-3-methylvalerate) and of (2R)-2,3-dihydroxy-3-methylbutanoate (2,3-dihydroxyisovalerate) into 2-oxo-3-methylbutanoate (2-oxoisovalerate), the penultimate precursor to L-isoleucine and L-valine, respectively. This is Dihydroxy-acid dehydratase from Shewanella sp. (strain MR-4).